We begin with the raw amino-acid sequence, 376 residues long: Peroxisomal targeting signal 2 receptor (376 aa).

WD repeat units lie at residues 58-98 (DTQD…YPVM), 102-142 (EHQR…NTSL), 182-222 (DNND…PLFM), 226-267 (AHNG…PNVH), 279-319 (GHEF…TSRV), and 339-376 (AHTEFVMGCDWSLWGEPGWVVTTGWDEMVYVWNTQRLQ).

Belongs to the WD repeat peroxin-7 family. Interacts with PEX20. In terms of processing, polyubiquitinated, leading to its degradation by the proteasome. Ubiquitination is dependent of PEX5 and PEX20 and takes place following recycling into the cytosol.

The protein localises to the cytoplasm. It localises to the cytosol. It is found in the peroxisome matrix. Functionally, receptor required for the peroxisomal import of proteins containing a C-terminal PTS2-type peroxisomal targeting signal, such as 3-oxoacyl-CoA thiolase. Specifically binds to cargo proteins containing a PTS2 peroxisomal targeting signal in the cytosol. Cargo protein-binding triggers interaction with PEX20 and formation of a ternary complex composed of PEX20 and PEX7 along with PTS2-containing cargo proteins, which is tranlocated into peroxisomes by passing through the peroxisomal docking complex. PEX7 receptor is then retrotranslocated into the cytosol, where it is ubiquitinated and degraded. This Komagataella phaffii (strain GS115 / ATCC 20864) (Yeast) protein is Peroxisomal targeting signal 2 receptor.